The chain runs to 300 residues: Cation-efflux pump FieF (300 aa).

4 helical membrane-spanning segments follow: residues 12–32 (AAIAATAMASLLLLIKIFAWW), 39–59 (ILAALVDSLVDIGASLTNLLV), 82–102 (AALAQSMFISGSALFLFLTGI), and 114–134 (PGVGVIVTIVALICTIILVSF). Asp45 and Asp49 together coordinate Zn(2+). Residues His153 and Asp157 each coordinate Zn(2+). The next 2 membrane-spanning stretches (helical) occupy residues 156–176 (SDVMMNGAILLALGLSWYGWH) and 178–198 (ADALFALGIGIYILYSALRMG).

The protein belongs to the cation diffusion facilitator (CDF) transporter (TC 2.A.4) family. FieF subfamily. Homodimer.

The protein localises to the cell inner membrane. It carries out the reaction Zn(2+)(in) + H(+)(out) = Zn(2+)(out) + H(+)(in). The catalysed reaction is Cd(2+)(in) + H(+)(out) = Cd(2+)(out) + H(+)(in). The enzyme catalyses Fe(2+)(in) + H(+)(out) = Fe(2+)(out) + H(+)(in). Functionally, divalent metal cation transporter which exports Zn(2+), Cd(2+) and possibly Fe(2+). May be involved in zinc and iron detoxification by efflux. In Shigella flexneri serotype 5b (strain 8401), this protein is Cation-efflux pump FieF.